Consider the following 62-residue polypeptide: Photosystem II reaction center protein Z (62 aa).

Transmembrane regions (helical) follow at residues alanine 8–alanine 28 and phenylalanine 41–isoleucine 61.

It belongs to the PsbZ family. In terms of assembly, PSII is composed of 1 copy each of membrane proteins PsbA, PsbB, PsbC, PsbD, PsbE, PsbF, PsbH, PsbI, PsbJ, PsbK, PsbL, PsbM, PsbT, PsbY, PsbZ, Psb30/Ycf12, at least 3 peripheral proteins of the oxygen-evolving complex and a large number of cofactors. It forms dimeric complexes.

The protein resides in the plastid. The protein localises to the chloroplast thylakoid membrane. In terms of biological role, may control the interaction of photosystem II (PSII) cores with the light-harvesting antenna, regulates electron flow through the 2 photosystem reaction centers. PSII is a light-driven water plastoquinone oxidoreductase, using light energy to abstract electrons from H(2)O, generating a proton gradient subsequently used for ATP formation. The protein is Photosystem II reaction center protein Z of Calycanthus floridus var. glaucus (Eastern sweetshrub).